The chain runs to 166 residues: Probable calcium-binding protein CML17 (166 aa).

EF-hand domains lie at 12–47, 48–83, 91–126, and 127–162; these read EQINELREIFRSFDRNKDGSLTQLELGSLLRALGVK, PSPDQFETLIDKADTKSNGLVEFPEFVALVSPELLS, YTEEQLLRLFRIFDTDGNGFITAAELAHSMAKLGHA, and LTVAELTGMIKEADSDGDGRINFQEFAKAINSAAFD. The Ca(2+) site is built by D25, N27, D29, S31, and E36. Ca(2+)-binding residues include D104, D106, N108, E115, D140, D142, D144, R146, and E151.

In terms of biological role, potential calcium sensor. The chain is Probable calcium-binding protein CML17 (CML17) from Arabidopsis thaliana (Mouse-ear cress).